The primary structure comprises 655 residues: MGIFSIANQHIRFAVKLACAIVLALFIGFHFQLETPRWAVLTAAIVAAGPAFAAGGEPYSGAIRYRGMLRIIGTFIGCIAALIIIISMIRAPLLMILVCCVWAGFCTWISSLVRIENSYAWGLSGYTALIIVITIQTEPLLTPQFALERCSEIVIGIGCAILADLLFSPRSIKQEVDRELDSLLVAQYQLMQLCIKHGDSEEVDNAWGDLVRRTAALEGMRSNLNMESSRWVRANRRLKALNTLSLTLITQSCETYLIQNTRPELITDTFRELFETPVETVQDVHRQLKRMRRVIVWTGERETPVTLYSWVGAATRYLLLKRGVISNTKISATEEEILQGEPVVKVESAERHHAMVNFWRTTLSCILGTLFWLWTGWTSGNGAMVMIAVVTSLAMRLPNPRMVCIDFIYGTLAALPLGLLYFLVIIPNTQQSMLLLCLSLAVLGFFIGIEVQKRRLGSMGALASTINIIVLDNPMTFHFSQFLDSALGQIVGCMLAFIVILLVRDKSKDRTGRVLLNQFVSAAVSAMTTNVVRRKENRLPALYQQLFLLMNKFPGDLPKFRLALTMIIAHQRLRDAPIPVNEDLSVFHRQLRRTADHVISAGSDDKRRRYFGQLLDELDIYQEKLRIWEAPTQVTEPVKRLTGMLHKYQNALTDS.

Transmembrane regions (helical) follow at residues 13-33, 38-58, 69-89, 93-113, 121-141, 152-172, 370-390, 407-427, 431-451, 459-479, and 482-502; these read FAVKLACAIVLALFIGFHFQL, WAVLTAAIVAAGPAFAAGGEP, LRIIGTFIGCIAALIIIISMI, LLMILVCCVWAGFCTWISSLV, WGLSGYTALIIVITIQTEPLL, EIVIGIGCAILADLLFSPRSI, LFWLWTGWTSGNGAMVMIAVV, FIYGTLAALPLGLLYFLVIIP, QSMLLLCLSLAVLGFFIGIEV, MGALASTINIIVLDNPMTFHF, and FLDSALGQIVGCMLAFIVILL.

This sequence belongs to the aromatic acid exporter ArAE (TC 2.A.85) family.

It localises to the cell inner membrane. In terms of biological role, forms an efflux pump with AaeA. Could function as a metabolic relief valve, allowing to eliminate certain compounds when they accumulate to high levels in the cell. The chain is p-hydroxybenzoic acid efflux pump subunit AaeB from Salmonella enteritidis PT4 (strain P125109).